The sequence spans 224 residues: Type VII secretion system protein EsaE (224 aa).

Interacts with EssD.

In terms of biological role, component of the type VII secretion system (Ess). Plays a role in Esx protein secretion. Plays an essential role in the processing and secretion of EssD. This chain is Type VII secretion system protein EsaE, found in Staphylococcus aureus (strain USA300).